The primary structure comprises 102 residues: Small ribosomal subunit protein uS10 (102 aa).

The protein belongs to the universal ribosomal protein uS10 family. As to quaternary structure, part of the 30S ribosomal subunit.

Its function is as follows. Involved in the binding of tRNA to the ribosomes. The protein is Small ribosomal subunit protein uS10 of Bifidobacterium adolescentis (strain ATCC 15703 / DSM 20083 / NCTC 11814 / E194a).